The following is a 329-amino-acid chain: Mitochondrial glycine transporter (329 aa).

Solcar repeat units follow at residues 19-103, 130-214, and 232-316; these read SKTT…LRQP, LSNW…LKRH, and SSSS…LILR. 6 helical membrane-spanning segments follow: residues 25–50, 78–104, 136–161, 189–212, 236–262, and 291–309; these read FAAGLCSGLTSSILLQPADLLKTRVQ, GTLPSALRTGFGSALYFTTLNALRQPL, LGTGAVARVAAGFVMMPVTVIKVRYE, GFGATAARDAPYAGLYVLFYEQLK, INFISGGLAAGLATTITNPFDAVKTRL, and GLGLRITRKALSSALAWTV.

This sequence belongs to the mitochondrial carrier (TC 2.A.29) family. SLC25A38 subfamily.

It is found in the mitochondrion inner membrane. The enzyme catalyses glycine(in) = glycine(out). Functionally, mitochondrial glycine transporter that imports glycine into the mitochondrial matrix. Plays an important role in providing glycine for the first enzymatic step in heme biosynthesis, the condensation of glycine with succinyl-CoA to produce 5-aminolevulinate (ALA) in the mitochondrial matrix. In Aspergillus terreus (strain NIH 2624 / FGSC A1156), this protein is Mitochondrial glycine transporter.